The following is a 564-amino-acid chain: Potassium-transporting ATPase potassium-binding subunit (564 aa).

A run of 10 helical transmembrane segments spans residues 4–24 (YDYLLLLAFFAIVLLPAPWLG), 67–87 (TLALLAFNLAGFLLLFAVLLL), 135–155 (IGLTVQNFVSAATGLAVLVAL), 179–199 (LYGLLPLCLVLALLLVWQGVP), 258–278 (FEVASIILIPVALVFTFGHYV), 286–306 (AIIACMLALFLIGGSTALWSE), 382–402 (AGLYGMLLFVLIAVFLAGLMI), 420–440 (LLVATLLVMPVGVLILGAIAA), 487–507 (VMIGLAMLIGRFGYILPVLAL), and 534–554 (LLLLTILLVGGLTFLPTLALG).

It belongs to the KdpA family. In terms of assembly, the system is composed of three essential subunits: KdpA, KdpB and KdpC.

The protein resides in the cell inner membrane. Functionally, part of the high-affinity ATP-driven potassium transport (or Kdp) system, which catalyzes the hydrolysis of ATP coupled with the electrogenic transport of potassium into the cytoplasm. This subunit binds the periplasmic potassium ions and delivers the ions to the membrane domain of KdpB through an intramembrane tunnel. This Pseudomonas entomophila (strain L48) protein is Potassium-transporting ATPase potassium-binding subunit.